The chain runs to 299 residues: Homeobox protein Nkx-2.5 (299 aa).

The span at 90-119 (KDPKDHKKDICPLQKTLEHDKREAEDPERP) shows a compositional bias: basic and acidic residues. The tract at residues 90–128 (KDPKDHKKDICPLQKTLEHDKREAEDPERPRQRKRRKPR) is disordered. The homeobox DNA-binding region spans 124–183 (RRKPRVLFSQAQVYELERRFKQQKYLSAPERDHLANVLKLTSTQVKIWFQNRRYKCKRQR).

This sequence belongs to the NK-2 homeobox family. In terms of assembly, homodimer (via the homeobox); binds DNA as homodimer. As to expression, heart and gut tissue.

The protein resides in the nucleus. Its function is as follows. Transcription factor required for the development of the heart and the spleen. Implicated in commitment to and/or differentiation of the myocardial lineage. May regulate the expression of genes involved in cardiogenesis and play a role in the formation of gut and the pharyngeal region. Binds to the core DNA motif of promoter. This chain is Homeobox protein Nkx-2.5 (nkx-2.5), found in Xenopus laevis (African clawed frog).